The following is a 590-amino-acid chain: Mitochondrial distribution and morphology protein 34 (590 aa).

In terms of domain architecture, SMP-LTD spans 1–225; the sequence is MSFIFNRETF…LPSVIFNMSQ (225 aa). Basic residues predominate over residues 393–405; that stretch reads RRKIKMRSRKPSK. Residues 393-456 form a disordered region; it reads RRKIKMRSRK…APEGGPNAED (64 aa). Residues 413 to 427 show a composition bias toward polar residues; the sequence is PAQNDSGTSSCSNVA.

Belongs to the MDM34 family. Component of the ER-mitochondria encounter structure (ERMES) or MDM complex, composed of MMM1, MDM10, MDM12 and MDM34.

It is found in the mitochondrion outer membrane. Its function is as follows. Component of the ERMES/MDM complex, which serves as a molecular tether to connect the endoplasmic reticulum (ER) and mitochondria. Components of this complex are involved in the control of mitochondrial shape and protein biogenesis, and function in nonvesicular lipid trafficking between the ER and mitochondria. MDM34 is required for the interaction of the ER-resident membrane protein MMM1 and the outer mitochondrial membrane-resident beta-barrel protein MDM10. The sequence is that of Mitochondrial distribution and morphology protein 34 from Eremothecium gossypii (strain ATCC 10895 / CBS 109.51 / FGSC 9923 / NRRL Y-1056) (Yeast).